The following is a 210-amino-acid chain: MSEKDQSVNNTEEDFNVETEDNQNDTNIENSVSNTDNSEANASDSENNSEESIKDEESESQDTKIKELEKLANDNEEKYLRLYAEFENYKRRIQKENQINATYKAQGVLTDILPSIDNIERALQIEGDDESFKSLQKGVQMVHESLLRALKDNGLEEILAEGKEFDPNLHQAVVQDDNPDFKSGEVTQELQKGYKLKDRVLRPSMVKVNQ.

A disordered region spans residues 1 to 71; that stretch reads MSEKDQSVNN…DTKIKELEKL (71 aa). Positions 11–23 are enriched in acidic residues; sequence TEEDFNVETEDNQ. Positions 24 to 35 are enriched in polar residues; the sequence is NDTNIENSVSNT. Over residues 36–46 the composition is skewed to low complexity; that stretch reads DNSEANASDSE. Acidic residues predominate over residues 47–60; that stretch reads NNSEESIKDEESES. A compositionally biased stretch (basic and acidic residues) spans 61-71; it reads QDTKIKELEKL.

This sequence belongs to the GrpE family. As to quaternary structure, homodimer.

It localises to the cytoplasm. Participates actively in the response to hyperosmotic and heat shock by preventing the aggregation of stress-denatured proteins, in association with DnaK and GrpE. It is the nucleotide exchange factor for DnaK and may function as a thermosensor. Unfolded proteins bind initially to DnaJ; upon interaction with the DnaJ-bound protein, DnaK hydrolyzes its bound ATP, resulting in the formation of a stable complex. GrpE releases ADP from DnaK; ATP binding to DnaK triggers the release of the substrate protein, thus completing the reaction cycle. Several rounds of ATP-dependent interactions between DnaJ, DnaK and GrpE are required for fully efficient folding. In Staphylococcus epidermidis (strain ATCC 35984 / DSM 28319 / BCRC 17069 / CCUG 31568 / BM 3577 / RP62A), this protein is Protein GrpE.